We begin with the raw amino-acid sequence, 38 residues long: MEVNILGLIATALFIVIPTSFLLILYIQTVASAKQQEQ.

The chain crosses the membrane as a helical span at residues 5–25; that stretch reads ILGLIATALFIVIPTSFLLIL.

The protein belongs to the PsbM family. As to quaternary structure, PSII is composed of 1 copy each of membrane proteins PsbA, PsbB, PsbC, PsbD, PsbE, PsbF, PsbH, PsbI, PsbJ, PsbK, PsbL, PsbM, PsbT, PsbX, PsbY, PsbZ, Psb30/Ycf12, at least 3 peripheral proteins of the oxygen-evolving complex and a large number of cofactors. It forms dimeric complexes.

It is found in the plastid. Its subcellular location is the cyanelle thylakoid membrane. One of the components of the core complex of photosystem II (PSII). PSII is a light-driven water:plastoquinone oxidoreductase that uses light energy to abstract electrons from H(2)O, generating O(2) and a proton gradient subsequently used for ATP formation. It consists of a core antenna complex that captures photons, and an electron transfer chain that converts photonic excitation into a charge separation. This subunit is found at the monomer-monomer interface. The protein is Photosystem II reaction center protein M of Cyanophora paradoxa.